The primary structure comprises 1663 residues: Cortactin-binding protein 2 (1663 aa).

Disordered regions lie at residues 1 to 23 (MATD…AGAA), 203 to 222 (KKKT…RSTE), 359 to 440 (QASH…LHPG), 454 to 478 (GNAN…SPTS), and 498 to 617 (RFTS…KPSI). Residues 119–276 (KKMQERMSAQ…EQLKRGSDSK (158 aa)) adopt a coiled-coil conformation. Low complexity predominate over residues 386 to 396 (PSTGSTPDPTS). Residue arginine 498 is modified to Asymmetric dimethylarginine. Residues 583–593 (TVASPPSSLPQ) are compositionally biased toward polar residues. ANK repeat units follow at residues 709-739 (GRPT…DINY), 743-772 (DGHS…QVNA), 776-805 (NGFT…NINH), 809-838 (GGQT…NRSV), 842-871 (DGWT…PARG), and 912-942 (EGWT…EPER). The disordered stretch occupies residues 1446 to 1485 (NKKKGESGAWRKVNTSPRRKSGRFSLPTWNKPDLSTEGMK). At serine 1524 the chain carries Phosphoserine. Positions 1580 to 1663 (SQKEVSPLSS…KNEHLEKPNK (84 aa)) are disordered. Over residues 1582–1599 (KEVSPLSSHQTTECSNSK) the composition is skewed to polar residues. The segment covering 1624 to 1638 (SQNTKRSSSSSNTRQ) has biased composition (low complexity). Residues 1645-1663 (SKEENWNLHKNEHLEKPNK) are compositionally biased toward basic and acidic residues.

In terms of assembly, interacts with CTTN/cortactin SH3 domain. Interacts with STRN, STRN4/zinedin and MOB4/phocein; this interactions mediate the association with the STRIPAK core complex and may regulate dendritic spine distribution of the STRIPAK complex in hippocampal neurons. Activation of glutamate receptors weakens the interaction with STRN and STRN4.

It localises to the cytoplasm. It is found in the cell cortex. The protein localises to the cell projection. Its subcellular location is the dendritic spine. Regulates the dendritic spine distribution of CTTN/cortactin in hippocampal neurons, and thus controls dendritic spinogenesis and dendritic spine maintenance. Associates with the striatin-interacting phosphatase and kinase (STRIPAK) core complex to regulate dendritic spine distribution of the STRIPAK complex in hippocampal neurons. The protein is Cortactin-binding protein 2 (CTTNBP2) of Pongo abelii (Sumatran orangutan).